Reading from the N-terminus, the 541-residue chain is uncharacterized protein (541 aa).

The next 5 helical transmembrane spans lie at Phe4 to Gly23, Phe30 to Val47, Val57 to Ala79, Leu91 to Asn113, and Leu156 to Ala178. RCK C-terminal domains are found at residues Gln187–Asp271 and Leu273–Asp354. The next 5 helical transmembrane spans lie at Phe362 to Leu384, Ala389 to Ser411, Leu424 to Phe446, Leu456 to Tyr478, and Leu516 to Phe538.

Belongs to the AAE transporter (TC 2.A.81) family.

The protein resides in the cell membrane. This is an uncharacterized protein from Corynebacterium diphtheriae (strain ATCC 700971 / NCTC 13129 / Biotype gravis).